Here is a 329-residue protein sequence, read N- to C-terminus: DNA-directed RNA polymerase subunit alpha (329 aa).

An alpha N-terminal domain (alpha-NTD) region spans residues 1–235 (MLGSVTDFLK…EQLEAFVDLR (235 aa)). The tract at residues 249 to 329 (FDPILLRPVD…NWPPASIADE (81 aa)) is alpha C-terminal domain (alpha-CTD).

It belongs to the RNA polymerase alpha chain family. In terms of assembly, homodimer. The RNAP catalytic core consists of 2 alpha, 1 beta, 1 beta' and 1 omega subunit. When a sigma factor is associated with the core the holoenzyme is formed, which can initiate transcription.

The catalysed reaction is RNA(n) + a ribonucleoside 5'-triphosphate = RNA(n+1) + diphosphate. Its function is as follows. DNA-dependent RNA polymerase catalyzes the transcription of DNA into RNA using the four ribonucleoside triphosphates as substrates. The chain is DNA-directed RNA polymerase subunit alpha from Aeromonas hydrophila subsp. hydrophila (strain ATCC 7966 / DSM 30187 / BCRC 13018 / CCUG 14551 / JCM 1027 / KCTC 2358 / NCIMB 9240 / NCTC 8049).